The chain runs to 170 residues: Large ribosomal subunit protein uL5 (170 aa).

This sequence belongs to the universal ribosomal protein uL5 family. Part of the 50S ribosomal subunit; contacts the 5S rRNA and probably tRNA. Forms a bridge to the 30S subunit in the 70S ribosome.

This is one of the proteins that bind and probably mediate the attachment of the 5S RNA into the large ribosomal subunit, where it forms part of the central protuberance. In the 70S ribosome it contacts protein S13 of the 30S subunit (bridge B1b), connecting the 2 subunits; this bridge is implicated in subunit movement. May contact the P site tRNA; the 5S rRNA and some of its associated proteins might help stabilize positioning of ribosome-bound tRNAs. The protein is Large ribosomal subunit protein uL5 of Thermoplasma volcanium (strain ATCC 51530 / DSM 4299 / JCM 9571 / NBRC 15438 / GSS1).